Reading from the N-terminus, the 255-residue chain is NAD kinase (255 aa).

The Proton acceptor role is filled by Asp-44. Residues 44 to 45 (DG), His-49, 114 to 115 (NE), Asp-144, Ala-152, 155 to 160 (SAYNLS), and Gln-216 each bind NAD(+).

Belongs to the NAD kinase family. It depends on a divalent metal cation as a cofactor.

Its subcellular location is the cytoplasm. The enzyme catalyses NAD(+) + ATP = ADP + NADP(+) + H(+). Functionally, involved in the regulation of the intracellular balance of NAD and NADP, and is a key enzyme in the biosynthesis of NADP. Catalyzes specifically the phosphorylation on 2'-hydroxyl of the adenosine moiety of NAD to yield NADP. This is NAD kinase from Rickettsia rickettsii (strain Iowa).